An 810-amino-acid chain; its full sequence is Phospholipase D alpha 1 (810 aa).

The C2 domain occupies 1-126 (MAQHLLHGTL…INGEEVDQWV (126 aa)). Asp187 is a Ca(2+) binding site. The PLD phosphodiesterase 1 domain occupies 327–366 (TMFTHHQKIVVVDSEMPSRGGSEMRRIVSFVGGIDLCDGR). Active-site residues include His332, Lys334, and Asp339. A 1,2-diacyl-sn-glycero-3-phosphate is bound at residue His332. The Ca(2+) site is built by His372 and His406. Positions 522 and 661 each coordinate a 1,2-diacyl-sn-glycero-3-phosphate. The PLD phosphodiesterase 2 domain occupies 656 to 683 (FMIYVHTKMMIVDDEYIIIGSANINQRS). Active-site residues include His661, Lys663, and Asp668. Glu722 serves as a coordination point for Ca(2+).

This sequence belongs to the phospholipase D family. C2-PLD subfamily. Interacts with GPA1. This binding inhibits PLDALPHA1 activity and is relieved by GTP. It depends on Ca(2+) as a cofactor. In terms of tissue distribution, highly expressed in roots, stems and flowers, moderately in leaves, seedlings and siliques. Not detected in seeds.

It localises to the cytoplasm. The protein localises to the cell membrane. The protein resides in the mitochondrion membrane. Its subcellular location is the microsome membrane. It is found in the vacuole. It localises to the cytoplasmic vesicle. The protein localises to the clathrin-coated vesicle. The enzyme catalyses a 1,2-diacyl-sn-glycero-3-phosphocholine + H2O = a 1,2-diacyl-sn-glycero-3-phosphate + choline + H(+). Not inhibited by neomycin. In terms of biological role, hydrolyzes glycerol-phospholipids at the terminal phosphodiesteric bond to generate phosphatidic acids (PA). Plays an important role in various cellular processes, including phytohormone action and response to stress, characterized by acidification of the cell. Involved in wound induction of jasmonic acid. May be involved in membrane lipid remodeling. Probably involved in freezing tolerance by modulating the cold-responsive genes and accumulation of osmolytes. Can use phosphatidylcholine (PC), phosphatidylethanolamine (PE) and phosphatidylglycerol (PG) as substrates, both in presence or in absence of PIP2. Its main substrate is phosphatidylcholine. Stimulates the intrinsic GTPase activity of GPA1 upon binding. Mediates the abscisic acid effects on stomata through interaction with GPA1 and the production of phosphatidic acid that bind to ABI1. Involved in seed aging and deterioration. Involved in microtubule stabilization and salt tolerance. Involved in abscisic acid-induced stomatal closure. The sequence is that of Phospholipase D alpha 1 from Arabidopsis thaliana (Mouse-ear cress).